The primary structure comprises 122 residues: Large ribosomal subunit protein uL14 (122 aa).

The protein belongs to the universal ribosomal protein uL14 family. In terms of assembly, part of the 50S ribosomal subunit. Forms a cluster with proteins L3 and L19. In the 70S ribosome, L14 and L19 interact and together make contacts with the 16S rRNA in bridges B5 and B8.

Functionally, binds to 23S rRNA. Forms part of two intersubunit bridges in the 70S ribosome. The polypeptide is Large ribosomal subunit protein uL14 (Borreliella burgdorferi (strain ZS7) (Borrelia burgdorferi)).